Consider the following 447-residue polypeptide: Na(+)-translocating NADH-quinone reductase subunit A (447 aa).

The protein belongs to the NqrA family. Composed of six subunits; NqrA, NqrB, NqrC, NqrD, NqrE and NqrF.

The enzyme catalyses a ubiquinone + n Na(+)(in) + NADH + H(+) = a ubiquinol + n Na(+)(out) + NAD(+). NQR complex catalyzes the reduction of ubiquinone-1 to ubiquinol by two successive reactions, coupled with the transport of Na(+) ions from the cytoplasm to the periplasm. NqrA to NqrE are probably involved in the second step, the conversion of ubisemiquinone to ubiquinol. The polypeptide is Na(+)-translocating NADH-quinone reductase subunit A (Klebsiella pneumoniae subsp. pneumoniae (strain ATCC 700721 / MGH 78578)).